The following is a 229-amino-acid chain: Adenylate kinase (229 aa).

A propeptide spanning residues methionine 1 to phenylalanine 9 is cleaved from the precursor. ATP is bound at residue glycine 25 to threonine 30. Residues serine 45–valine 74 are NMP. Residues threonine 46, arginine 51, glycine 72–valine 74, glycine 100–arginine 103, and glutamine 107 contribute to the AMP site. The segment at glycine 141 to aspartate 178 is LID. Arginine 142 serves as a coordination point for ATP. The AMP site is built by arginine 175 and arginine 186. Glycine 214 is a binding site for ATP.

This sequence belongs to the adenylate kinase family.

It is found in the hydrogenosome. The enzyme catalyses AMP + ATP = 2 ADP. Functionally, catalyzes the reversible transfer of the terminal phosphate group between ATP and AMP. Plays an important role in cellular energy homeostasis and in adenine nucleotide metabolism. This Trichomonas vaginalis protein is Adenylate kinase.